Consider the following 229-residue polypeptide: 5'-methylthioadenosine/S-adenosylhomocysteine nucleosidase (229 aa).

E12 serves as the catalytic Proton acceptor. Residues G78, I152, and 173–174 (ME) contribute to the substrate site. D197 serves as the catalytic Proton donor.

Belongs to the PNP/UDP phosphorylase family. MtnN subfamily.

The catalysed reaction is S-adenosyl-L-homocysteine + H2O = S-(5-deoxy-D-ribos-5-yl)-L-homocysteine + adenine. It carries out the reaction S-methyl-5'-thioadenosine + H2O = 5-(methylsulfanyl)-D-ribose + adenine. It catalyses the reaction 5'-deoxyadenosine + H2O = 5-deoxy-D-ribose + adenine. It participates in amino-acid biosynthesis; L-methionine biosynthesis via salvage pathway; S-methyl-5-thio-alpha-D-ribose 1-phosphate from S-methyl-5'-thioadenosine (hydrolase route): step 1/2. In terms of biological role, catalyzes the irreversible cleavage of the glycosidic bond in both 5'-methylthioadenosine (MTA) and S-adenosylhomocysteine (SAH/AdoHcy) to adenine and the corresponding thioribose, 5'-methylthioribose and S-ribosylhomocysteine, respectively. Also cleaves 5'-deoxyadenosine, a toxic by-product of radical S-adenosylmethionine (SAM) enzymes, into 5-deoxyribose and adenine. This is 5'-methylthioadenosine/S-adenosylhomocysteine nucleosidase from Haemophilus influenzae (strain PittGG).